The following is a 510-amino-acid chain: Cobyric acid synthase (510 aa).

The 210-residue stretch at C249–A458 folds into the GATase cobBQ-type domain. C336 functions as the Nucleophile in the catalytic mechanism. The active site involves H450.

Belongs to the CobB/CobQ family. CobQ subfamily.

Its pathway is cofactor biosynthesis; adenosylcobalamin biosynthesis. Catalyzes amidations at positions B, D, E, and G on adenosylcobyrinic A,C-diamide. NH(2) groups are provided by glutamine, and one molecule of ATP is hydrogenolyzed for each amidation. The sequence is that of Cobyric acid synthase from Shewanella oneidensis (strain ATCC 700550 / JCM 31522 / CIP 106686 / LMG 19005 / NCIMB 14063 / MR-1).